Here is a 360-residue protein sequence, read N- to C-terminus: Biotin synthase (360 aa).

Residues 1–25 (MQHAPLNFVPDAAKVPPTPGQSPNA) are disordered. In terms of domain architecture, Radical SAM core spans 58–285 (NAVQLSTLLS…KAMVRLSAGR (228 aa)). Residues C73, C77, and C80 each coordinate [4Fe-4S] cluster. 4 residues coordinate [2Fe-2S] cluster: C117, C148, C208, and R280. A disordered region spans residues 340 to 360 (QAEGAQHSHSSHCHIDITPAD).

Belongs to the radical SAM superfamily. Biotin synthase family. Homodimer. [4Fe-4S] cluster serves as cofactor. Requires [2Fe-2S] cluster as cofactor.

It carries out the reaction (4R,5S)-dethiobiotin + (sulfur carrier)-SH + 2 reduced [2Fe-2S]-[ferredoxin] + 2 S-adenosyl-L-methionine = (sulfur carrier)-H + biotin + 2 5'-deoxyadenosine + 2 L-methionine + 2 oxidized [2Fe-2S]-[ferredoxin]. It functions in the pathway cofactor biosynthesis; biotin biosynthesis; biotin from 7,8-diaminononanoate: step 2/2. Functionally, catalyzes the conversion of dethiobiotin (DTB) to biotin by the insertion of a sulfur atom into dethiobiotin via a radical-based mechanism. The chain is Biotin synthase from Ralstonia nicotianae (strain ATCC BAA-1114 / GMI1000) (Ralstonia solanacearum).